The chain runs to 523 residues: MELTLWTYEGPPHVGAMRIASSMKDIHYVLHAPQGDTYADLLFTMIERRGQRPPVTYTTFQARDLGGDTAELVKKNIKEAVERFKPKTLLVGESCTAELIQDQPGALAKGMGFDMPIVNLELPAYSKKENWGASETFYQLTRTLLKEKVGSSEKISPLRWKELGRRPKVNILGPSLLGFRCRDDVIEIQRILSEQGIDTNVVAPLGANPNDIERLIDAEINICLYQEIAEASCEWLKRNFGMEYTNTIPIGIKNTIEFINEVHNKLDLPLTNKKELEHKSKLPWYSKSVDSNYLTGKRVFIFGDGTHAIAAAKIAKDELGFEVVGIGTYSREMARQVRATAKELNVEALITNNYLEVEDAMKKAAPELVLGTQMERHSAKRLGIPCAVISTPMHVQDVPARYSPQMGWEGANVIFDDWVHPLMMGLEEHLIDMFKHDFEFVDGHQSHLGHTATKTKDLINSDNKKDNNPKEGIIWTESGRAELTKVPFFVRGKVKTNTEKYAILRGIPEISDETLYDAKAYFS.

Aspartate 36 lines the [4Fe-4S] cluster pocket. The active-site Proton donor is aspartate 290. 425 to 426 (GL) provides a ligand contact to substrate.

This sequence belongs to the ChlB/BchB/BchZ family. Protochlorophyllide reductase is composed of three subunits; ChlL, ChlN and ChlB. Forms a heterotetramer of two ChlB and two ChlN subunits. The cofactor is [4Fe-4S] cluster.

It catalyses the reaction chlorophyllide a + oxidized 2[4Fe-4S]-[ferredoxin] + 2 ADP + 2 phosphate = protochlorophyllide a + reduced 2[4Fe-4S]-[ferredoxin] + 2 ATP + 2 H2O. The protein operates within porphyrin-containing compound metabolism; chlorophyll biosynthesis (light-independent). In terms of biological role, component of the dark-operative protochlorophyllide reductase (DPOR) that uses Mg-ATP and reduced ferredoxin to reduce ring D of protochlorophyllide (Pchlide) to form chlorophyllide a (Chlide). This reaction is light-independent. The NB-protein (ChlN-ChlB) is the catalytic component of the complex. This is Light-independent protochlorophyllide reductase subunit B from Prochlorococcus marinus (strain MIT 9215).